We begin with the raw amino-acid sequence, 529 residues long: Glycerol kinase 5 (529 aa).

2 residues coordinate ATP: Ser28 and Ser29. Glycerol is bound by residues Arg98, Asp275, and Gln276. Positions 297, 340, and 440 each coordinate ATP.

Belongs to the FGGY kinase family.

Its subcellular location is the cytoplasm. It catalyses the reaction glycerol + ATP = sn-glycerol 3-phosphate + ADP + H(+). The protein operates within polyol metabolism; glycerol degradation via glycerol kinase pathway; sn-glycerol 3-phosphate from glycerol: step 1/1. In terms of biological role, skin-specific kinase that plays a key role in glycerol metabolism, catalyzing its phosphorylation to produce sn-glycerol 3-phosphate. Involved in skin-specific regulation of sterol regulatory element-binding protein (SREBP) processing and lipid biosynthesis. This is Glycerol kinase 5 from Homo sapiens (Human).